Reading from the N-terminus, the 198-residue chain is Autophagy-related protein 16 (198 aa).

Positions 24–177 form a coiled coil; it reads ELVQTCSQMA…NKELVDRWMK (154 aa).

Belongs to the ATG16 family. In terms of assembly, homodimer. Part of the ATG5-ATG12/ATG16 complex. Several units of each may be present in this complex. Interacts directly with ATG12.

Its subcellular location is the preautophagosomal structure membrane. Stabilizes the ATG5-ATG12 conjugate. The ATG5-ATG12/ATG16 complex is required for efficient promotion of ATG8-conjugation to phosphatidylethanolamine and ATG8 localization to the pre-autophagosomal structure (PAS). Also recruits ATG3 to the PAS. Involved in endoplasmic reticulum-specific autophagic process and is essential for the survival of cells subjected to severe ER stress. Autophagy is required for proper vegetative growth, asexual/sexual reproduction, and full virulence. Autophagy is particularly involved in the biosynthesis of deoxynivalenol (DON), an important virulence determinant. This is Autophagy-related protein 16 from Gibberella zeae (strain ATCC MYA-4620 / CBS 123657 / FGSC 9075 / NRRL 31084 / PH-1) (Wheat head blight fungus).